The chain runs to 364 residues: F-box protein At1g59680 (364 aa).

Residues 2-49 (TTMSDLSVDLVGEILSRVPLTSLSAVRCTCKSWNTLSKHQIFGKAELA) form the F-box domain.

The sequence is that of F-box protein At1g59680 from Arabidopsis thaliana (Mouse-ear cress).